Consider the following 175-residue polypeptide: MGKVLSKIFGNKEMRILMLGLDAAGKTTILYKLKLGQSVTTIPTVGFNVETVTYKNVKFNVWDVGGQDKIRPLWRHYYTGTQGLIFVVDCADRDRIDEARQELHRIINDREMRDAIILIFANKQDLPDAMKPHEIQEKLGLTRIRDRNWYVQPSCATSGDGLYEGLTWLTSNYKS.

A lipid anchor (N-myristoyl glycine) is attached at Gly-2. A lipid anchor (N6-myristoyl lysine) is attached at Lys-3. GTP is bound by residues 23–28, 41–44, 63–67, 122–125, and 155–156; these read AAGKTT, TIPT, DVGGQ, NKQD, and CA.

The protein belongs to the small GTPase superfamily. Arf family. Interacts (when activated) with GGA1, GGA2 and GGA3; the interaction is required for proper subcellular location of GGA1, GGA2 and GGA3. Interacts with PIP5K1C. Interacts with USP6 (via Rab-GAP TBC domain). Interacts with RAB11FIP3 and RAB11FIP4. Interacts with HERC1. Interacts with ARHGAP21. Interacts with ASAP3; the interaction is stabilized by calcium ions. Interacts with NCS1/FREQ at the plasma membrane. Interacts with TBC1D24. Interacts with ECPAS. Interacts with MICALL1. Interacts with SPAG9 homodimers, forming heterotetramers. Interacts with CYTH3. Interacts with ASAP2. Interacts with UACA. Interacts with KIF23, forming heterodimers and heterotetramers. Interacts with C9orf72. Interacts (GTP-bound form) with TJAP1/PILT. Interacts with PRKAA2. Interacts with CD36 (when palmitoylated); this interaction mediates CD36 transport from the Golgi to the plasma membrane. Interacts with APBB1. As to quaternary structure, (Microbial infection) Interacts with the V.cholerae enterotoxin subunit A1; this causes a conformation change so that the toxin can bind NAD and catalyze the ADP-ribosylation of Gs alpha. In terms of assembly, (Microbial infection) Interacts with EspG from enteropathogenic E.coli. (Microbial infection) Identified in a complex with RAB1A and EspG from enteropathogenic E.coli. As to quaternary structure, (Microbial infection) Interacts with human enterovirus 71 protein VP1. Post-translationally, GTP-bound form is myristoylated on Lys-3 by NMT1 and NMT2, allowing ARF6 to remain on membranes during the GTPase cycle, thereby promoting its activity. GDP-bound inactive form is demyristoylated on Lys-3 by SIRT2 at early endosomes or endocytic recycling compartment to allow its efficient activation by a guanine exchange factor (GEF) after GDP release. In terms of tissue distribution, ubiquitous, with higher levels in heart, substantia nigra, and kidney.

The protein localises to the cytoplasm. It is found in the cytosol. It localises to the cell membrane. Its subcellular location is the endosome membrane. The protein resides in the recycling endosome membrane. The protein localises to the cell projection. It is found in the filopodium membrane. It localises to the ruffle. Its subcellular location is the cleavage furrow. The protein resides in the midbody. The protein localises to the midbody ring. It is found in the early endosome membrane. It localises to the golgi apparatus. Its subcellular location is the trans-Golgi network membrane. The enzyme catalyses GTP + H2O = GDP + phosphate + H(+). With respect to regulation, activation is generally mediated by a guanine exchange factor (GEF), while inactivation through hydrolysis of bound GTP is catalyzed by a GTPase activating protein (GAP). Activated by ASAP3. Inactivated by ACAP1 and ACAP2. Activated by NGF via NTRK1. Activated by PRKAA2 through its C-terminal regulatory domain. Its function is as follows. GTP-binding protein involved in protein trafficking that regulates endocytic recycling and cytoskeleton remodeling. GTP-bound form plays an important role in the transport of multiple palmitoylated proteins form the Golgi to the plasma membrane. Required for normal completion of mitotic cytokinesis. Plays a role in the reorganization of the actin cytoskeleton and the formation of stress fibers. Involved in the regulation of dendritic spine development, contributing to the regulation of dendritic branching and filopodia extension. Potentiates the neurite outgrowth in primary neurons by interacting with the molecular adapter APBB1. Plays an important role in membrane trafficking, during junctional remodeling and epithelial polarization. Regulates surface levels of adherens junction proteins such as CDH1. Required for NTRK1 sorting to the recycling pathway from early endosomes. In terms of biological role, (Microbial infection) Functions as an allosteric activator of the cholera toxin catalytic subunit, an ADP-ribosyltransferase. Functionally, (Microbial infection) Plays a key role in the endocytosis of enterovirus 71 and thus viral entry into brain microvascular endothelial cells. The chain is ADP-ribosylation factor 6 from Homo sapiens (Human).